Here is a 329-residue protein sequence, read N- to C-terminus: Fructose-1,6-bisphosphatase class 1 (329 aa).

E84, D103, L105, and D106 together coordinate Mg(2+). Substrate is bound by residues D106–S109, N196, and K262. Residue E268 coordinates Mg(2+).

It belongs to the FBPase class 1 family. In terms of assembly, homotetramer. The cofactor is Mg(2+).

It localises to the cytoplasm. It carries out the reaction beta-D-fructose 1,6-bisphosphate + H2O = beta-D-fructose 6-phosphate + phosphate. It participates in carbohydrate biosynthesis; gluconeogenesis. This Shewanella loihica (strain ATCC BAA-1088 / PV-4) protein is Fructose-1,6-bisphosphatase class 1.